Here is a 153-residue protein sequence, read N- to C-terminus: Ribonuclease K6 (153 aa).

Residues methionine 1–glutamine 27 form the signal peptide. The active-site Proton acceptor is histidine 41. 4 cysteine pairs are disulfide-bonded: cysteine 49–cysteine 107, cysteine 63–cysteine 117, cysteine 81–cysteine 132, and cysteine 88–cysteine 95. Residue asparagine 58 is glycosylated (N-linked (GlcNAc...) asparagine). Lysine 64–threonine 68 contributes to the substrate binding site. Asparagine 85 carries N-linked (GlcNAc...) asparagine glycosylation. Substrate is bound at residue lysine 89. The active-site Proton donor is the histidine 148.

The protein belongs to the pancreatic ribonuclease family. In terms of assembly, interacts (via N-terminus) with bacterial lipopolysaccharide (LPS). In terms of tissue distribution, highly expressed in spleen (at protein level). Has little or no expression in healthy kidneys (at protein level). Detected at high levels in infected kidneys (at protein level). Expressed at low levels in bladder. Also detected in skeletal muscle, heart and bone marrow.

It localises to the secreted. Its subcellular location is the lysosome. The protein resides in the cytoplasmic granule. Ribonuclease which shows a preference for the pyrimidines uridine and cytosine. Has potent antibacterial activity against a range of Gram-positive and Gram-negative bacteria, including P.aeruginosa, A.baumanii, M.luteus, S.aureus, E.faecalis, E.faecium, S.saprophyticus and E.coli. Causes loss of bacterial membrane integrity, and also promotes agglutination of Gram-negative bacteria. Probably contributes to urinary tract sterility. Bactericidal activity is independent of RNase activity. In Mus musculus (Mouse), this protein is Ribonuclease K6 (Rnase6).